A 503-amino-acid chain; its full sequence is AMP phosphorylase (503 aa).

Residues G168, 194 to 199 (SRAITS), and T203 contribute to the AMP site. Residue D256 is the Proton donor of the active site. Residues S264 and K288 each contribute to the AMP site.

Belongs to the thymidine/pyrimidine-nucleoside phosphorylase family. Type 2 subfamily.

The enzyme catalyses AMP + phosphate = alpha-D-ribose 1,5-bisphosphate + adenine. It catalyses the reaction CMP + phosphate = cytosine + alpha-D-ribose 1,5-bisphosphate. It carries out the reaction UMP + phosphate = alpha-D-ribose 1,5-bisphosphate + uracil. Functionally, catalyzes the conversion of AMP and phosphate to adenine and ribose 1,5-bisphosphate (R15P). Exhibits phosphorylase activity toward CMP and UMP in addition to AMP. Functions in an archaeal AMP degradation pathway, together with R15P isomerase and RubisCO. The polypeptide is AMP phosphorylase (Pyrococcus horikoshii (strain ATCC 700860 / DSM 12428 / JCM 9974 / NBRC 100139 / OT-3)).